We begin with the raw amino-acid sequence, 380 residues long: MSTYIQVNIYNQTLEVLKMRGLDLQSILKTIGCPDSWVTEVPIHPPAQKIQKPATPPTSCAPQLVSSPKCLESISAQSQNVLKKPFKSISAELGFAQPLNLVDTLGLKPRDSDAMSRGKRPASVLKGLFDDWDPTANLDIPGTSSDIPSDPSSALKVPKKEVLDESEEILDQTSGSSSFSLNDSEQANEQERNIIEDLLRQQMFTESKIKNEEASLLKGLKKGLGEELESSHANYVITCNFPGCGLKYNWRVKYGKLRLLDHALTHSNRKIPCKLCGFECTNVRRMRSHYAKAHPNERVEGYGMKALVSGDSSRIGDGVDGDIDQQVSDDELKELWNNCFSESIHLVGQASGFVEGEKYRRMTKRRKLDREAMNSMNFMF.

The interval 137–187 (NLDIPGTSSDIPSDPSSALKVPKKEVLDESEEILDQTSGSSSFSLNDSEQA) is disordered. Polar residues-rich tracts occupy residues 142-152 (GTSSDIPSDPS) and 171-187 (DQTS…SEQA). The C2H2-type zinc finger occupies 271 to 294 (IPCKLCGFECTNVRRMRSHYAKAH).

The protein localises to the nucleus. The sequence is that of Putative zinc finger protein C02F5.12 from Caenorhabditis elegans.